Here is a 314-residue protein sequence, read N- to C-terminus: MESNGSVSSMVNLEKFLCERLVDQSQPISERFRALFSLRNLKGPGPRNALILASRDSSNLLAHEAAFALGQMQDAEAIPALESVLNDMSLHPIVRHEAAEALGAIGLAGNVNILKKSLSSDPAQEVRETCELALKRIEDMSNVDAENQSSTTEKSPFMSVDPAGPAASFSSVHQLRQVLLDETKGMYERYAALFALRNHGGEEAVSAIVDSLSASSALLRHEVAYVLGQLQSKTALATLSKVLRDVNEHPMVRHEAAEALGSIADEQSIALLEEFSKDPEPIVAQSCEVALSMLEFENSGKSFEFFFTQDPLVH.

Met-1 is subject to N-acetylmethionine. 5 HEAT-like PBS-type repeats span residues 61 to 87, 94 to 120, 188 to 214, 219 to 245, and 252 to 278; these read LAHEAAFALGQMQDAEAIPALESVLND, VRHEAAEALGAIGLAGNVNILKKSLSS, ERYAALFALRNHGGEEAVSAIVDSLSA, LRHEVAYVLGQLQSKTALATLSKVLRD, and VRHEAAEALGSIADEQSIALLEEFSKD. His-63, Glu-64, His-96, and Glu-97 together coordinate Fe cation. Positions 221, 222, 254, and 255 each coordinate Fe cation.

The protein belongs to the deoxyhypusine hydroxylase family. It depends on Fe(2+) as a cofactor.

It carries out the reaction [eIF5A protein]-deoxyhypusine + AH2 + O2 = [eIF5A protein]-hypusine + A + H2O. It functions in the pathway protein modification; eIF5A hypusination. In terms of biological role, catalyzes the hydroxylation of the N(6)-(4-aminobutyl)-L-lysine intermediate to form hypusine, an essential post-translational modification only found in mature eIF-5A factor. The chain is Deoxyhypusine hydroxylase from Arabidopsis thaliana (Mouse-ear cress).